The primary structure comprises 447 residues: Cysteine--tRNA ligase (447 aa).

Position 28 (Cys-28) interacts with Zn(2+). The short motif at 30-40 (PTVYNYIHIGN) is the 'HIGH' region element. Residues Cys-211, His-236, and Glu-240 each coordinate Zn(2+). The 'KMSKS' region signature appears at 268-272 (KMSKS). Lys-271 provides a ligand contact to ATP.

Belongs to the class-I aminoacyl-tRNA synthetase family. As to quaternary structure, monomer. The cofactor is Zn(2+).

It is found in the cytoplasm. It catalyses the reaction tRNA(Cys) + L-cysteine + ATP = L-cysteinyl-tRNA(Cys) + AMP + diphosphate. The chain is Cysteine--tRNA ligase from Streptococcus agalactiae serotype V (strain ATCC BAA-611 / 2603 V/R).